Here is a 406-residue protein sequence, read N- to C-terminus: MRFVDEAVITVEAGDGGNGVASFRREKFVPFGGPDGGDGGRGGSIYIQADDDTSTLVDYRYTRKFRAERGKNGAGANCTGRGGEDVVLKVPVGTTIVDTDSGDIIGDLVEDGQRVMVASGGEGGLGNTHFKSSTNRAPRKCTTGTKGEFREIRLELKVLADVGLLGMPNAGKSTFIRAVSAAKPKVADYPFTTMVPNLGVVDADRHRSFVMADIPGLIEGAAEGAGLGIRFLKHLARTRILLHIIDVQPIDGSDPAHNAKAIMNELAKFSPTLAKLPIVLVLNKLDQIAEESREEWCQHILDELQWTGPVFKTSGLLEEGTKEVVYYLMDQIEQQREREVEDPEYAAEVRAFREQLEAETREQTIAAKEAYRAMRKAQRLESMMDDDDDFDDDEDDGDVESIYVRD.

Residues 1 to 159 (MRFVDEAVIT…REIRLELKVL (159 aa)) form the Obg domain. Residues 120-143 (GGEGGLGNTHFKSSTNRAPRKCTT) are disordered. An OBG-type G domain is found at 160–333 (ADVGLLGMPN…VVYYLMDQIE (174 aa)). GTP contacts are provided by residues 166 to 173 (GMPNAGKS), 191 to 195 (FTTMV), 213 to 216 (DIPG), 283 to 286 (NKLD), and 314 to 316 (SGL). The Mg(2+) site is built by S173 and T193. A disordered region spans residues 381-406 (ESMMDDDDDFDDDEDDGDVESIYVRD). Residues 383-399 (MMDDDDDFDDDEDDGDV) are compositionally biased toward acidic residues.

This sequence belongs to the TRAFAC class OBG-HflX-like GTPase superfamily. OBG GTPase family. As to quaternary structure, monomer. Mg(2+) serves as cofactor.

It localises to the cytoplasm. Functionally, an essential GTPase which binds GTP, GDP and possibly (p)ppGpp with moderate affinity, with high nucleotide exchange rates and a fairly low GTP hydrolysis rate. Plays a role in control of the cell cycle, stress response, ribosome biogenesis and in those bacteria that undergo differentiation, in morphogenesis control. This chain is GTPase Obg, found in Acinetobacter baumannii (strain ACICU).